The sequence spans 646 residues: UvrABC system protein C (646 aa).

In terms of domain architecture, GIY-YIG spans 16-95 (VEPGVYRFRD…IKEFDPRFNV (80 aa)). Positions 208-243 (DRFARALEQQMNAAAEQLDFERAARLRDDLSALKRA) constitute a UVR domain.

The protein belongs to the UvrC family. Interacts with UvrB in an incision complex.

The protein resides in the cytoplasm. Its function is as follows. The UvrABC repair system catalyzes the recognition and processing of DNA lesions. UvrC both incises the 5' and 3' sides of the lesion. The N-terminal half is responsible for the 3' incision and the C-terminal half is responsible for the 5' incision. The protein is UvrABC system protein C of Mycobacterium bovis (strain BCG / Pasteur 1173P2).